We begin with the raw amino-acid sequence, 444 residues long: MSTILESLPTGQKVGIAFSGGLDTSAALHWMRLKGAVPYAYTANLGQPDEDDYDSIPRRATEYGAEGARLIDCRAQLVAEGIAALQSGAFHISTAGVTYFNTTPIGRAVTGTMLVAAMKEDGVNIWGDGSTYKGNDIERFYRYGLLVNPDLKIYKPWLDQTFIDELGGRAEMSEFMRQSGFAYKMSAEKAYSTDSNLLGATHEAKDLESLESGIKIVNPIMGVAFWRDDVQIAKEEVTVRFEEGQPVALNGKTFPNAVELLLEANRIGGRHGLGMSDQIENRIIEAKSRGIYEAPGLALLFAAYERLVTGIHNEDTIEQYRESGRRLGRLLYQGRWFDPQAIMLRETAQRWVARAITGEVTLELRRGNDYSILSTKSPNLTYQPERLSMEKVASTFSPRDRIGQLTMRNLDITDTRDKLRVYSQVGLLAPGEASALPQIKGDKE.

ATP-binding positions include 17–25 and A43; that span reads AFSGGLDTS. Y99 lines the L-citrulline pocket. Residues G129 and T131 each coordinate ATP. Residues T131, N135, and D136 each coordinate L-aspartate. N135 contacts L-citrulline. D136 contributes to the ATP binding site. L-citrulline is bound by residues R139 and S192. Position 194 (D194) interacts with ATP. L-citrulline is bound by residues T201, E203, and E280.

This sequence belongs to the argininosuccinate synthase family. Type 2 subfamily. Homotetramer.

The protein localises to the cytoplasm. It carries out the reaction L-citrulline + L-aspartate + ATP = 2-(N(omega)-L-arginino)succinate + AMP + diphosphate + H(+). It functions in the pathway amino-acid biosynthesis; L-arginine biosynthesis; L-arginine from L-ornithine and carbamoyl phosphate: step 2/3. This Paraburkholderia phymatum (strain DSM 17167 / CIP 108236 / LMG 21445 / STM815) (Burkholderia phymatum) protein is Argininosuccinate synthase.